The primary structure comprises 373 residues: Probable ethanolamine permease EutH (373 aa).

10 helical membrane-spanning segments follow: residues 5-25, 38-58, 61-81, 111-131, 143-163, 166-186, 197-217, 236-256, 307-327, and 331-351; these read EIIIYLMVIFMILGAIDKIIG, IMAMGSLTLAMVGIITLAPVL, ILSPIVVPIYTALGADPAMFA, ILGSMMGPTIVFTIPVALGII, VLSGIITIPIGCLIGGLVAGF, IMIFKNLVPIILVAALIMLGL, FTIFGKGVVIVATIGLVAGAI, IEIVGGIALVLAGAFCLVFVI, VAFAVSAAFVLGDHLGFTAGV, and MIFPMIVGKLVGGVTAVAVGI.

Belongs to the EutH family.

The protein resides in the cell membrane. It carries out the reaction ethanolamine(in) = ethanolamine(out). Its function is as follows. Probably involved in the diffusion of protonated ethanolamine (EA) into the cell at low pH. At low pH most EA is protonated, and this permease becomes necessary. Contributes to bacterial survival and replication in acidic macrophage vacuoles, but not to bacterial uptake by macrophages. This chain is Probable ethanolamine permease EutH, found in Listeria monocytogenes serotype 1/2a (strain 10403S).